The following is a 682-amino-acid chain: Tail-specific protease (682 aa).

The signal sequence occupies residues 1–22 (MNMFFRLTALAGLLAIAGQTFA). The PDZ domain maps to 238-322 (NTEMSLSLEG…SKVRLEILPA (85 aa)). Catalysis depends on charge relay system residues serine 452, aspartate 463, and lysine 477. A compositionally biased stretch (basic and acidic residues) spans 635–650 (GKPELKKLDDLPKDYQ). The segment at 635-654 (GKPELKKLDDLPKDYQEPDP) is disordered.

Belongs to the peptidase S41A family.

The protein resides in the cell inner membrane. It catalyses the reaction The enzyme shows specific recognition of a C-terminal tripeptide, Xaa-Yaa-Zaa, in which Xaa is preferably Ala or Leu, Yaa is preferably Ala or Tyr, and Zaa is preferably Ala, but then cleaves at a variable distance from the C-terminus. A typical cleavage is -Ala-Ala-|-Arg-Ala-Ala-Lys-Glu-Asn-Tyr-Ala-Leu-Ala-Ala.. Involved in the cleavage of a C-terminal peptide of 11 residues from the precursor form of penicillin-binding protein 3 (PBP3). May be involved in protection of the bacterium from thermal and osmotic stresses. This is Tail-specific protease (prc) from Escherichia coli (strain K12).